The primary structure comprises 247 residues: Caffeoyl-CoA O-methyltransferase 2 (247 aa).

Lysine 21 contributes to the substrate binding site. Residues threonine 63, glutamate 85, 87–88 (GV), serine 93, aspartate 111, and alanine 140 contribute to the S-adenosyl-L-methionine site. Aspartate 163 contacts substrate. Aspartate 163 serves as a coordination point for a divalent metal cation. Aspartate 165 serves as a coordination point for S-adenosyl-L-methionine. A divalent metal cation-binding residues include aspartate 189 and asparagine 190. Asparagine 194 contacts substrate.

It belongs to the class I-like SAM-binding methyltransferase superfamily. Cation-dependent O-methyltransferase family. CCoAMT subfamily. Requires a divalent metal cation as cofactor.

It catalyses the reaction (E)-caffeoyl-CoA + S-adenosyl-L-methionine = (E)-feruloyl-CoA + S-adenosyl-L-homocysteine + H(+). It functions in the pathway aromatic compound metabolism; phenylpropanoid biosynthesis. In terms of biological role, methylates caffeoyl-CoA to feruloyl-CoA and 5-hydroxyferuloyl-CoA to sinapoyl-CoA. Plays a role in the synthesis of feruloylated polysaccharides. Involved in the reinforcement of the plant cell wall. Also involved in the responding to wounding or pathogen challenge by the increased formation of cell wall-bound ferulic acid polymers. The polypeptide is Caffeoyl-CoA O-methyltransferase 2 (CCOAOMT2) (Eucalyptus globulus (Tasmanian blue gum)).